A 388-amino-acid chain; its full sequence is UDP-4-amino-4-deoxy-L-arabinose--oxoglutarate aminotransferase (388 aa).

N6-(pyridoxal phosphate)lysine is present on lysine 183.

It belongs to the DegT/DnrJ/EryC1 family. ArnB subfamily. As to quaternary structure, homodimer. The cofactor is pyridoxal 5'-phosphate.

The enzyme catalyses UDP-4-amino-4-deoxy-beta-L-arabinose + 2-oxoglutarate = UDP-beta-L-threo-pentopyranos-4-ulose + L-glutamate. It functions in the pathway nucleotide-sugar biosynthesis; UDP-4-deoxy-4-formamido-beta-L-arabinose biosynthesis; UDP-4-deoxy-4-formamido-beta-L-arabinose from UDP-alpha-D-glucuronate: step 2/3. The protein operates within bacterial outer membrane biogenesis; lipopolysaccharide biosynthesis. Its function is as follows. Catalyzes the conversion of UDP-4-keto-arabinose (UDP-Ara4O) to UDP-4-amino-4-deoxy-L-arabinose (UDP-L-Ara4N). The modified arabinose is attached to lipid A and is required for resistance to polymyxin and cationic antimicrobial peptides. The sequence is that of UDP-4-amino-4-deoxy-L-arabinose--oxoglutarate aminotransferase from Shewanella sediminis (strain HAW-EB3).